Reading from the N-terminus, the 156-residue chain is ADKAASGVLTKLPQKQIQEMKEAFSMLDVDRDGFVNKDDLKAISEQLGRTPDDKELTAMLKEAPGPLNFTMFLSIFSDKLSGTDSEETIRNAFAMFDELETKKLNIEYIKDLLENMGDNFTKDEMRMTFKEAPVTGGKFDYVKFTAMIKGSGEDDA.

At A1 the chain carries Blocked amino end (Ala). 2 consecutive EF-hand domains span residues 15–50 and 84–119; these read KQIQ…LGRT and DSEE…MGDN. Residues D28, D30, D32, and D39 each coordinate Ca(2+).

In terms of biological role, in molluscan muscle, calcium regulation is associated with myosin rather than with actin. Muscle myosin contains two types of light chains: the catalytic light chain, essential for ATPase activity, and the regulatory light chain, a calcium-binding protein responsible for Ca(2+) dependent binding and Ca(2+) dependent Mg-ATPase activity. This is Myosin regulatory light chain, striated adductor muscle from Chlamys nipponensis akazara (Akazara scallop).